Consider the following 446-residue polypeptide: tRNA modification GTPase MnmE (446 aa).

(6S)-5-formyl-5,6,7,8-tetrahydrofolate is bound by residues arginine 24, glutamate 81, and lysine 120. The TrmE-type G domain occupies 216–368 (GLHAVLIGPP…LHIRLRALAL (153 aa)). A K(+)-binding site is contributed by asparagine 226. GTP contacts are provided by residues 226–231 (NAGKSS), 245–251 (TDVAGTT), and 270–273 (DTAG). Residue serine 230 coordinates Mg(2+). K(+) contacts are provided by threonine 245, valine 247, and threonine 250. Mg(2+) is bound at residue threonine 251. Lysine 446 lines the (6S)-5-formyl-5,6,7,8-tetrahydrofolate pocket.

This sequence belongs to the TRAFAC class TrmE-Era-EngA-EngB-Septin-like GTPase superfamily. TrmE GTPase family. As to quaternary structure, homodimer. Heterotetramer of two MnmE and two MnmG subunits. The cofactor is K(+).

The protein localises to the cytoplasm. In terms of biological role, exhibits a very high intrinsic GTPase hydrolysis rate. Involved in the addition of a carboxymethylaminomethyl (cmnm) group at the wobble position (U34) of certain tRNAs, forming tRNA-cmnm(5)s(2)U34. This is tRNA modification GTPase MnmE from Xanthomonas euvesicatoria pv. vesicatoria (strain 85-10) (Xanthomonas campestris pv. vesicatoria).